The primary structure comprises 146 residues: Hemoglobin subunit beta-2 (146 aa).

A Globin domain is found at Glu2–His146. His63 and His92 together coordinate heme b.

The protein belongs to the globin family. As to quaternary structure, hb 2 is a heterotetramer of two alpha-2 and two beta-2 chains. In terms of tissue distribution, red blood cells.

In terms of biological role, involved in oxygen transport from gills to the various peripheral tissues. In Gobionotothen gibberifrons (Humped rockcod), this protein is Hemoglobin subunit beta-2 (hbb2).